A 495-amino-acid chain; its full sequence is ATP synthase subunit beta, chloroplastic (495 aa).

172-179 serves as a coordination point for ATP; sequence GGAGVGKT.

This sequence belongs to the ATPase alpha/beta chains family. In terms of assembly, F-type ATPases have 2 components, CF(1) - the catalytic core - and CF(0) - the membrane proton channel. CF(1) has five subunits: alpha(3), beta(3), gamma(1), delta(1), epsilon(1). CF(0) has four main subunits: a(1), b(1), b'(1) and c(9-12).

The protein localises to the plastid. It is found in the chloroplast thylakoid membrane. It catalyses the reaction ATP + H2O + 4 H(+)(in) = ADP + phosphate + 5 H(+)(out). Produces ATP from ADP in the presence of a proton gradient across the membrane. The catalytic sites are hosted primarily by the beta subunits. In Scilla siberica (Siberian squill), this protein is ATP synthase subunit beta, chloroplastic.